The primary structure comprises 344 residues: MAKIRVLVVDDSATMRSLISAALNRDPDIEVVGGAGDPFEARGMIKALNPDVVTLDIEMPNMNGIDFLEKIMRLRPMPVVMVSTLTQAGAEMTLRALELGAVDCVGKPADATGTQEALAEIVAKVKIAARASVRTNAGAAPTSAPTRRKDFMPSGDIVAIGSSTGGVEALLSILQLFPETCPPTVITQHMPATFTASFAARLDRSSGAKVQEASDGALLEPGKVYVAPGGATHLEVVRSAGLRCRLVAGDPVSGHRPSVDVLFNSVAHAVGDKAVGVILTGMGRDGAQGLLTMRKAGAKTLGQDEASCVVYGMPRSAFEIGAVERQVSLSSMGQSILDLASARR.

Positions R5 to V122 constitute a Response regulatory domain. Position 56 is a 4-aspartylphosphate (D56). The 193-residue stretch at F151–R343 folds into the CheB-type methylesterase domain. Active-site residues include S163, H189, and D285.

The protein belongs to the CheB family. Post-translationally, phosphorylated by CheA. Phosphorylation of the N-terminal regulatory domain activates the methylesterase activity.

It localises to the cytoplasm. The enzyme catalyses [protein]-L-glutamate 5-O-methyl ester + H2O = L-glutamyl-[protein] + methanol + H(+). It carries out the reaction L-glutaminyl-[protein] + H2O = L-glutamyl-[protein] + NH4(+). Involved in chemotaxis. Part of a chemotaxis signal transduction system that modulates chemotaxis in response to various stimuli. Catalyzes the demethylation of specific methylglutamate residues introduced into the chemoreceptors (methyl-accepting chemotaxis proteins or MCP) by CheR. Also mediates the irreversible deamidation of specific glutamine residues to glutamic acid. The protein is Protein-glutamate methylesterase/protein-glutamine glutaminase 1 of Caulobacter vibrioides (strain ATCC 19089 / CIP 103742 / CB 15) (Caulobacter crescentus).